Reading from the N-terminus, the 289-residue chain is Deleted in azoospermia-like (289 aa).

The interval 1–20 (MSANAEAQCGSISEDNTHSS) is disordered. The RRM domain occupies 36–117 (NTVFVGGIDI…PAIRKQQNLC (82 aa)). A DAZ domain is found at 162–187 (TYAYSSPAVLIQQQVPVGYQPAYNYQ).

It belongs to the RRM DAZ family.

It localises to the cytoplasm. Its function is as follows. RNA-binding protein, which probably plays a central role in gametogenesis in both males and females. Acts by binding to the 3'-UTR of mRNA, specifically recognizing GUU triplets, and promoting the translation of key transcripts. The chain is Deleted in azoospermia-like (DAZL) from Gallus gallus (Chicken).